A 449-amino-acid chain; its full sequence is UDP-N-acetylmuramate--L-alanine ligase (449 aa).

ATP is bound at residue 113–119; the sequence is GSHGKTT.

This sequence belongs to the MurCDEF family.

It is found in the cytoplasm. It catalyses the reaction UDP-N-acetyl-alpha-D-muramate + L-alanine + ATP = UDP-N-acetyl-alpha-D-muramoyl-L-alanine + ADP + phosphate + H(+). It functions in the pathway cell wall biogenesis; peptidoglycan biosynthesis. Cell wall formation. In Hydrogenobaculum sp. (strain Y04AAS1), this protein is UDP-N-acetylmuramate--L-alanine ligase.